Reading from the N-terminus, the 185-residue chain is Elongation factor P (185 aa).

The protein belongs to the elongation factor P family.

The protein localises to the cytoplasm. It functions in the pathway protein biosynthesis; polypeptide chain elongation. Its function is as follows. Involved in peptide bond synthesis. Stimulates efficient translation and peptide-bond synthesis on native or reconstituted 70S ribosomes in vitro. Probably functions indirectly by altering the affinity of the ribosome for aminoacyl-tRNA, thus increasing their reactivity as acceptors for peptidyl transferase. The polypeptide is Elongation factor P (Lachnoclostridium phytofermentans (strain ATCC 700394 / DSM 18823 / ISDg) (Clostridium phytofermentans)).